The chain runs to 86 residues: Sec-independent protein translocase protein TatA (86 aa).

Residues M1–G21 form a helical membrane-spanning segment. A disordered region spans residues A42–V86. Composition is skewed to polar residues over residues N47–D58 and E68–T77.

It belongs to the TatA/E family. The Tat system comprises two distinct complexes: a TatABC complex, containing multiple copies of TatA, TatB and TatC subunits, and a separate TatA complex, containing only TatA subunits. Substrates initially bind to the TatABC complex, which probably triggers association of the separate TatA complex to form the active translocon.

It is found in the cell inner membrane. Its function is as follows. Part of the twin-arginine translocation (Tat) system that transports large folded proteins containing a characteristic twin-arginine motif in their signal peptide across membranes. TatA could form the protein-conducting channel of the Tat system. This Photorhabdus laumondii subsp. laumondii (strain DSM 15139 / CIP 105565 / TT01) (Photorhabdus luminescens subsp. laumondii) protein is Sec-independent protein translocase protein TatA.